The primary structure comprises 597 residues: uncharacterized protein (597 aa).

2 consecutive transmembrane segments (helical) span residues 4–23 (LLLA…FKIV) and 209–231 (FVSV…GIAI).

The protein resides in the cell membrane. This is an uncharacterized protein from Archaeoglobus fulgidus (strain ATCC 49558 / DSM 4304 / JCM 9628 / NBRC 100126 / VC-16).